Consider the following 94-residue polypeptide: Enhancer of yellow 2 transcription factor (94 aa).

It belongs to the ENY2 family. As to quaternary structure, component of the nuclear pore complex (NPC)-associated AMEX complex (anchoring and mRNA export complex), composed of at least e(y)2 and xmas-2. Component of the SAGA transcription coactivator-HAT complexes, at least composed of Ada2b, e(y)2, Pcaf/Gcn5, Taf10 and Nipped-A/Trrap. Within the SAGA complex, e(y)2, Sgf11, and not/nonstop form an additional subcomplex of SAGA called the DUB module (deubiquitination module). Component of the THO complex, composed of at least e(y)2, HPR1, THO2, THOC5, THOC6 and THOC7. Interacts with e(y)1. Interacts with su(Hw) (via zinc fingers). Interacts with xmas-2; required for localization to the nuclear periphery. Interacts with the nuclear pore complex (NPC).

The protein resides in the nucleus. It is found in the nucleoplasm. Its subcellular location is the cytoplasm. In terms of biological role, involved in mRNA export coupled transcription activation by association with both the AMEX and the SAGA complexes. The SAGA complex is a multiprotein complex that activates transcription by remodeling chromatin and mediating histone acetylation and deubiquitination. Within the SAGA complex, participates in a subcomplex that specifically deubiquitinates histone H2B. The SAGA complex is recruited to specific gene promoters by activators, where it is required for transcription. Required for nuclear receptor-mediated transactivation. Involved in transcription elongation by recruiting the THO complex onto nascent mRNA. The AMEX complex functions in docking export-competent ribonucleoprotein particles (mRNPs) to the nuclear entrance of the nuclear pore complex (nuclear basket). AMEX participates in mRNA export and accurate chromatin positioning in the nucleus by tethering genes to the nuclear periphery. This is Enhancer of yellow 2 transcription factor from Drosophila grimshawi (Hawaiian fruit fly).